The chain runs to 253 residues: DNA repair protein RecO (253 aa).

The protein belongs to the RecO family.

In terms of biological role, involved in DNA repair and RecF pathway recombination. In Symbiobacterium thermophilum (strain DSM 24528 / JCM 14929 / IAM 14863 / T), this protein is DNA repair protein RecO.